The following is a 272-amino-acid chain: tRNA pseudouridine synthase A (272 aa).

Asp-52 functions as the Nucleophile in the catalytic mechanism. A substrate-binding site is contributed by Tyr-110.

The protein belongs to the tRNA pseudouridine synthase TruA family. In terms of assembly, homodimer.

The enzyme catalyses uridine(38/39/40) in tRNA = pseudouridine(38/39/40) in tRNA. In terms of biological role, formation of pseudouridine at positions 38, 39 and 40 in the anticodon stem and loop of transfer RNAs. The sequence is that of tRNA pseudouridine synthase A from Cupriavidus necator (strain ATCC 17699 / DSM 428 / KCTC 22496 / NCIMB 10442 / H16 / Stanier 337) (Ralstonia eutropha).